Reading from the N-terminus, the 272-residue chain is uncharacterized protein (272 aa).

Glu-163 is a catalytic residue.

It belongs to the glycosyl hydrolase 25 family.

This is an uncharacterized protein from Escherichia coli O157:H7.